We begin with the raw amino-acid sequence, 698 residues long: Probable metal-nicotianamine transporter YSL17 (698 aa).

Positions 1 to 36 (MAEEARGGQRVVVDDDREDASSVASSTERAFEGEPL) are disordered. The next 14 membrane-spanning stretches (helical) occupy residues 43-63 (VTAR…VVAM), 67-87 (LTSG…FFLA), 114-134 (IAVV…YILG), 157-177 (IGRV…IIVP), 216-236 (VVTL…QWFF), 277-297 (MITA…WPYI), 322-342 (VFVG…SALV), 395-415 (WVAV…VPLL), 424-444 (VAAA…GVGV), 463-483 (SWVG…GIIV), 511-531 (VGQV…FWVF), 567-587 (LPDH…ALSA), 607-627 (IGVA…AVGC), and 644-664 (LLLP…SLAS).

This sequence belongs to the YSL (TC 2.A.67.2) family. In terms of tissue distribution, expressed at low levels in roots.

The protein localises to the membrane. Its function is as follows. May be involved in the transport of nicotianamine-chelated metals. The protein is Probable metal-nicotianamine transporter YSL17 (YSL17) of Oryza sativa subsp. japonica (Rice).